The sequence spans 203 residues: uncharacterized protein (203 aa).

The chain crosses the membrane as a helical span at residues 89 to 109; sequence CEIPFAACSVLSWSLPTIAAL.

The protein resides in the membrane. This is an uncharacterized protein from Saccharomyces cerevisiae (strain ATCC 204508 / S288c) (Baker's yeast).